A 533-amino-acid chain; its full sequence is Suppressor of cytokine signaling 6 (533 aa).

2 disordered regions span residues 54-136 and 177-199; these read CDIG…WPLR and ELRD…PGDL. The segment covering 59–69 has biased composition (basic and acidic residues); sequence EDEKGKNRSKS. Positions 76 to 88 are enriched in basic residues; sequence LKRRLSAKQKTKG. Residues 177-189 show a composition bias toward basic and acidic residues; sequence ELRDLQPEPRPES. The SH2 domain maps to 382 to 489; that stretch reads WYWGPITRWE…TYPVRLTNPV (108 aa). Positions 484–533 constitute an SOCS box domain; sequence RLTNPVSRFMQVRSLQYLCRFVIRQYTRIDLIQKLPLPNKMKDYLQEKHY.

In terms of assembly, interacts with KIT (phosphorylated). Interacts with RBCK1. Interacts with phosphorylated IRS4. Interacts with PIM3.

Its pathway is protein modification; protein ubiquitination. SOCS family proteins form part of a classical negative feedback system that regulates cytokine signal transduction. May be a substrate recognition component of a SCF-like ECS (Elongin BC-CUL2/5-SOCS-box protein) E3 ubiquitin-protein ligase complex which mediates the ubiquitination and subsequent proteasomal degradation of target proteins. Regulates KIT degradation by ubiquitination of the tyrosine-phosphorylated receptor. The polypeptide is Suppressor of cytokine signaling 6 (Socs6) (Mus musculus (Mouse)).